A 483-amino-acid polypeptide reads, in one-letter code: MAYIEGNTGKWEYIIGLEIHAQISSKSKLFSGSSTIFAANPNSQVSYVDAAMPGMLPVLNKHCVYQAIKTGLGLKAKINKYSVFDRKNYFYADLPQGYQISQFYYPIVQNGTMEIPTSTGDLKTIRINRLHLEQDAGKSMHDQSPHYSFIDLNRAGIGLMEIVTEPDISSPDEAAEFVKKLRNLLRYIGSCDGDMEKGSMRCDANISVRRSGEPLGTRCEIKNINSIRNIIKAIEFEAKRQVDLLENGEAIIQETRLFNADSGETKTMRLKEEALDYRYFPDPDLLPLVISDELINELKANLPELPDQKIEKYTKEFGLSKYDAEVIVADESVAEYFEKAANECNPKMLTNWLTSELFGQLNKASIGINECKITPSNFAKLVKLIENDTISGKIAKTVFEIMFETGKAPDKIVEEKGLVQVSDNNVLNTVIDEVIAENPESVEGYKRGKDKLFGFFVGQVMKKTGGKANPTLVNQLLKDKLDS.

It belongs to the GatB/GatE family. GatB subfamily. As to quaternary structure, heterotrimer of A, B and C subunits.

The enzyme catalyses L-glutamyl-tRNA(Gln) + L-glutamine + ATP + H2O = L-glutaminyl-tRNA(Gln) + L-glutamate + ADP + phosphate + H(+). The catalysed reaction is L-aspartyl-tRNA(Asn) + L-glutamine + ATP + H2O = L-asparaginyl-tRNA(Asn) + L-glutamate + ADP + phosphate + 2 H(+). In terms of biological role, allows the formation of correctly charged Asn-tRNA(Asn) or Gln-tRNA(Gln) through the transamidation of misacylated Asp-tRNA(Asn) or Glu-tRNA(Gln) in organisms which lack either or both of asparaginyl-tRNA or glutaminyl-tRNA synthetases. The reaction takes place in the presence of glutamine and ATP through an activated phospho-Asp-tRNA(Asn) or phospho-Glu-tRNA(Gln). The chain is Aspartyl/glutamyl-tRNA(Asn/Gln) amidotransferase subunit B from Rickettsia felis (strain ATCC VR-1525 / URRWXCal2) (Rickettsia azadi).